Here is a 620-residue protein sequence, read N- to C-terminus: Membrane protein insertase YidC (620 aa).

Helical transmembrane passes span 5–25 (QIIG…FMST), 343–363 (LGWP…FDGL), 366–386 (VFSS…LVLL), 436–456 (LSGC…FNFF), 482–502 (LPFT…LMTI), and 529–549 (PVVF…YYFV).

It belongs to the OXA1/ALB3/YidC family. Type 1 subfamily. Interacts with the Sec translocase complex via SecD. Specifically interacts with transmembrane segments of nascent integral membrane proteins during membrane integration.

The protein localises to the cell inner membrane. In terms of biological role, required for the insertion and/or proper folding and/or complex formation of integral membrane proteins into the membrane. Involved in integration of membrane proteins that insert both dependently and independently of the Sec translocase complex, as well as at least some lipoproteins. Aids folding of multispanning membrane proteins. The polypeptide is Membrane protein insertase YidC (Cytophaga hutchinsonii (strain ATCC 33406 / DSM 1761 / CIP 103989 / NBRC 15051 / NCIMB 9469 / D465)).